The following is a 249-amino-acid chain: MAPSRKFFVGGNWKMNGRKQSLGELIGTLNAAKVPADTEVVCAPPTAYIDFARQKLDPKIAVAAQNCYKVTNGAFTGEISPGMIKDYGATWVVLGHSERRHVFGESDELIGQKVAHALAEGLGVIACIGEKLDEREAGITEKVVFEQTKVIADNVKDWSKVVLAYEPVWAIGTGKTATPQQAQEVHEKLRGWLKSNVSDAVAQSTRIIYGGSVTGATCKELASQPDVDGFLVGGASLKPEFVDIINAKQ.

Substrate is bound by residues N12 and K14. N6-acetyllysine is present on K14. The residue at position 68 (Y68) is a 3'-nitrotyrosine. A Phosphoserine modification is found at S80. The Electrophile role is filled by H96. Position 106 is a phosphoserine (S106). K142 participates in a covalent cross-link: Glycyl lysine isopeptide (Lys-Gly) (interchain with G-Cter in SUMO1). At K149 the chain carries N6-succinyllysine. K156 carries the post-translational modification N6-acetyllysine; alternate. K156 is subject to N6-succinyllysine; alternate. Phosphoserine is present on S159. Residue E166 is the Proton acceptor of the active site. A Phosphothreonine modification is found at T173. K194 is subject to N6-acetyllysine; alternate. K194 is modified (N6-succinyllysine; alternate). K194 is modified (N6-methyllysine; alternate). S198 is modified (phosphoserine). A 3'-nitrotyrosine modification is found at Y209. S212 is subject to Phosphoserine. T214 is modified (phosphothreonine). Residue S223 is modified to Phosphoserine. K238 carries the post-translational modification N6-acetyllysine.

It belongs to the triosephosphate isomerase family. As to quaternary structure, homodimer.

The protein localises to the cytoplasm. It carries out the reaction dihydroxyacetone phosphate = methylglyoxal + phosphate. The catalysed reaction is D-glyceraldehyde 3-phosphate = dihydroxyacetone phosphate. The protein operates within carbohydrate degradation; glycolysis; D-glyceraldehyde 3-phosphate from glycerone phosphate: step 1/1. It participates in carbohydrate biosynthesis; gluconeogenesis. Functionally, triosephosphate isomerase is an extremely efficient metabolic enzyme that catalyzes the interconversion between dihydroxyacetone phosphate (DHAP) and D-glyceraldehyde-3-phosphate (G3P) in glycolysis and gluconeogenesis. Its function is as follows. It is also responsible for the non-negligible production of methylglyoxal a reactive cytotoxic side-product that modifies and can alter proteins, DNA and lipids. This is Triosephosphate isomerase (TPI1) from Pongo abelii (Sumatran orangutan).